Reading from the N-terminus, the 478-residue chain is Isoeugenol monooxygenase (478 aa).

Fe cation contacts are provided by His167, His218, His282, and His471.

This sequence belongs to the carotenoid oxygenase family. In terms of assembly, monomer. Fe(2+) serves as cofactor.

The enzyme catalyses (E)-isoeugenol + O2 = vanillin + acetaldehyde. Its activity is regulated as follows. Inhibited by HgCl(2), AgNO(3), CuCl(2), phenylhydrazine, 8-hydroxyquinoline, R-cycloserine and p-chloromercuribenzoic acid. Involved in isoeugenol degradation. Catalyzes the oxidative cleavage of the side chain double-bond of isoeugenol to form vanillin and acetaldehyde. In Pseudomonas putida (Arthrobacter siderocapsulatus), this protein is Isoeugenol monooxygenase.